The primary structure comprises 199 residues: Cell division protein SepF (199 aa).

Residues 15–79 (TEDGDETEVQ…PQPQQKSSTE (65 aa)) form a disordered region.

Belongs to the SepF family. Homodimer. Interacts with FtsZ.

The protein resides in the cytoplasm. Cell division protein that is part of the divisome complex and is recruited early to the Z-ring. Probably stimulates Z-ring formation, perhaps through the cross-linking of FtsZ protofilaments. Its function overlaps with FtsA. The polypeptide is Cell division protein SepF (Streptococcus sanguinis (strain SK36)).